A 238-amino-acid polypeptide reads, in one-letter code: Probable xyloglucan-specific endo-beta-1,4-glucanase A (238 aa).

An N-terminal signal peptide occupies residues 1 to 18 (MKLSLSVALSLAASTAQA). Asn106 and Asn171 each carry an N-linked (GlcNAc...) asparagine glycan.

Belongs to the glycosyl hydrolase 12 (cellulase H) family.

The protein resides in the secreted. It carries out the reaction xyloglucan + H2O = xyloglucan oligosaccharides.. In terms of biological role, catalyzes endohydrolysis of 1,4-beta-D-glucosidic linkages in xyloglucan with retention of the beta-configuration of the glycosyl residues. Specific for xyloglucan and does not hydrolyze other cell wall components. In Aspergillus fumigatus (strain ATCC MYA-4609 / CBS 101355 / FGSC A1100 / Af293) (Neosartorya fumigata), this protein is Probable xyloglucan-specific endo-beta-1,4-glucanase A (xgeA).